A 35-amino-acid polypeptide reads, in one-letter code: Beta/omega-theraphotoxin-Bp1a (35 aa).

Cystine bridges form between cysteine 2–cysteine 16, cysteine 9–cysteine 21, and cysteine 15–cysteine 28.

It belongs to the neurotoxin 10 (Hwtx-1) family. 54 (ProTx-1) subfamily. Post-translationally, an unnatural amidation at Ser-35 provokes a 14-fold increased toxin ability to inhibit Nav1.2/SCN2A and a ~2-fold decreased toxin ability to inhibit both Nav1.5/SCN5A and Nav1.7/SCN9A. In terms of tissue distribution, expressed by the venom gland.

It localises to the secreted. Functionally, ion channel impairing toxin that inhibits voltage-gated calcium channel Cav3.1/CACNA1G (IC(50)=53 nM), voltage-gated potassium channels Kv2.1/KCNB1 (IC(50)=411 nM), all sodium channels tested (Nav1.2/SCN2A (IC(50)=60-104 nM), Nav1.5/SCN5A (IC(50)=76-358 nM), Nav1.6/SCN8A (IC(50)=21-133 nM), Nav1.7/SCN9A (IC(50)=51-95 nM), and Nav1.8/SCN10A) as well as the nociceptor cation channel TRPA1 (IC(50)=389 nM). Acts as a potent and selective blocker of voltage-gated calcium channel Cav3.1/CACNA1G, but not of Cav3.2/CACNA1H, and Cav3.3/CACNA1I. On Nav1.7/SCN9A, primarily interacts with the DII and DIV voltage-sensor domains. Also acts as an inhibitor of nociceptor cation channel TRPA1 (IC(50)~389 nM) by binding to the S1-S4 gating domain of TRPA1. It shows moderate affinity for lipid bilayers. The sequence is that of Beta/omega-theraphotoxin-Bp1a from Bumba pulcherrimaklaasi (Tarantula spider).